Consider the following 304-residue polypeptide: Nucleotide-binding protein KRH_12070 (304 aa).

An ATP-binding site is contributed by 27–34 (GMSGAGRS). 78–81 (DVRG) is a binding site for GTP.

This sequence belongs to the RapZ-like family.

Displays ATPase and GTPase activities. The protein is Nucleotide-binding protein KRH_12070 of Kocuria rhizophila (strain ATCC 9341 / DSM 348 / NBRC 103217 / DC2201).